We begin with the raw amino-acid sequence, 143 residues long: Transcriptional regulator MraZ (143 aa).

SpoVT-AbrB domains are found at residues 5 to 47 (EYQH…PMSE) and 76 to 119 (ATEC…SKEI).

This sequence belongs to the MraZ family. As to quaternary structure, forms oligomers.

It localises to the cytoplasm. Its subcellular location is the nucleoid. This Bacillus licheniformis (strain ATCC 14580 / DSM 13 / JCM 2505 / CCUG 7422 / NBRC 12200 / NCIMB 9375 / NCTC 10341 / NRRL NRS-1264 / Gibson 46) protein is Transcriptional regulator MraZ.